A 558-amino-acid polypeptide reads, in one-letter code: Hepatocyte nuclear factor 1-beta (558 aa).

Residues Met1–Glu31 are dimerization. The 32-residue stretch at Met1–Glu32 folds into the HNF-p1 domain. A phosphoserine mark is found at Ser49, Ser52, Ser75, and Ser80. Positions Thr66 to Asp85 are disordered. Residues Lys93 to Gln188 enclose the POU-specific atypical domain. Residues Met231–Gln311 constitute a DNA-binding region (homeobox; HNF1-type). Residues Thr323–Ser348 form a disordered region.

The protein belongs to the HNF1 homeobox family. Binds DNA as a dimer. Can form homodimer or heterodimer with HNF1-alpha. Interacts (via HNF-p1 domain) with PCBD1; the interaction increases its transactivation activity.

The protein resides in the nucleus. Its function is as follows. Transcription factor that binds to the inverted palindrome 5'-GTTAATNATTAAC-3'. Binds to the FPC element in the cAMP regulatory unit of the PLAU gene. Transcriptional activity is increased by coactivator PCBD1. This chain is Hepatocyte nuclear factor 1-beta (Hnf1b), found in Mus musculus (Mouse).